The chain runs to 1128 residues: Glutamate receptor-interacting protein 1 (1128 aa).

The residue at position 43 (serine 43) is a Phosphoserine. PDZ domains follow at residues 53-136 (VVEL…EYEL), 150-238 (TVEV…EYDV), 252-336 (LVEV…LPHH), 472-561 (EVVL…EFDV), 573-658 (HVKL…RKDE), and 673-755 (TVEL…KKQT). 2 disordered regions span residues 754 to 798 (QTDA…YPST) and 935 to 981 (MSLN…GRKS). The segment covering 944-974 (PRSQLGRQASFQERSSSRPHYSQTTRSNTLP) has biased composition (polar residues). Positions 1004–1086 (KVTLYKDSDM…KLDLVISRNP (83 aa)) constitute a PDZ 7 domain. Positions 1093 to 1115 (IDQQSLPGDWSEQNSAFFQQPSH) are enriched in polar residues. Residues 1093–1128 (IDQQSLPGDWSEQNSAFFQQPSHGGNLETREPTNTL) form a disordered region.

In terms of assembly, interacts with EPHA7, EPHB2, KIF5A, KIF5B, KIF5C, GRIA2, GRIA3, GRIPAP1/GRASP1, PPFIA1, PPFIA4, FRAS1, PLCD4, PTPRF and liprins-alpha. Can form homomultimers or heteromultimers with GRIP2. Forms a ternary complex with GRIA2 and CSPG4. Interacts with ATAD1 in an ATP-dependent manner. ATAD1-catalyzed ATP hydrolysis disrupts binding to ATAD1 and to GRIA2 and leads to AMPAR complex disassembly. Interacts with EFNB1, EFNB3 and the C-terminal tail of PRLHR. Interacts with SLC30A9. Interacts with BUD23. Forms a complex with NSG1, GRIA2 and STX12; controls the intracellular fate of AMPAR and the endosomal sorting of the GRIA2 subunit toward recycling and membrane targeting. Interacts with NSG1.

The protein resides in the cytoplasmic vesicle. The protein localises to the perikaryon. It localises to the cell projection. Its subcellular location is the dendrite. It is found in the cytoplasm. The protein resides in the endomembrane system. The protein localises to the postsynaptic cell membrane. It localises to the postsynaptic density. Its subcellular location is the endoplasmic reticulum membrane. May play a role as a localized scaffold for the assembly of a multiprotein signaling complex and as mediator of the trafficking of its binding partners at specific subcellular location in neurons. Through complex formation with NSG1, GRIA2 and STX12 controls the intracellular fate of AMPAR and the endosomal sorting of the GRIA2 subunit toward recycling and membrane targeting. The chain is Glutamate receptor-interacting protein 1 (GRIP1) from Homo sapiens (Human).